The following is a 166-amino-acid chain: Regulator of ribonuclease activity A (166 aa).

It belongs to the RraA family. As to quaternary structure, homotrimer. Binds to both RNA-binding sites in the C-terminal region of Rne and to RhlB.

Its subcellular location is the cytoplasm. In terms of biological role, globally modulates RNA abundance by binding to RNase E (Rne) and regulating its endonucleolytic activity. Can modulate Rne action in a substrate-dependent manner by altering the composition of the degradosome. Modulates RNA-binding and helicase activities of the degradosome. This is Regulator of ribonuclease activity A from Actinobacillus succinogenes (strain ATCC 55618 / DSM 22257 / CCUG 43843 / 130Z).